A 519-amino-acid chain; its full sequence is Mannuronan C5-epimerase (519 aa).

A signal peptide spans 1–25 (MNLHPHLRHSLLASALLLASGLATA). 6 PbH1 repeats span residues 219–246 (GTETYIVNTKMASFGYAKSKSYGVSISQ), 281–303 (TQDFVIKDSTYRDNIVYGIDPHD), 305–328 (SHRLIIAGNTVYGTKKKHGIIVSR), 330–352 (VNDSWIINNKSYDNKLSGVVIDR), 354–376 (SVNNLVAYNEIYRNHTDGITLYE), and 377–399 (SGDNLIWGNKLVNNRRHGIRVRN). The active-site Proton acceptor is His-302.

The protein belongs to the D-mannuronate C5-epimerase family.

Its subcellular location is the periplasm. The enzyme catalyses [(1-&gt;4)-beta-D-mannuronosyl](n) = [alginate](n). The protein operates within glycan biosynthesis; alginate biosynthesis. In terms of biological role, catalyzes the epimerization of beta-D-mannuronate to alpha-L-guluronate during the synthesis of the linear polysaccharide alginate. In addition, is part of a periplasmic protein complex that protects alginate from degradation by AlgL by channeling the newly formed alginate polymer through a scaffold that transfers the alginate polymer through the periplasmic space to the outer membrane secretin AlgE. The polypeptide is Mannuronan C5-epimerase (algG) (Pseudomonas putida (strain ATCC 47054 / DSM 6125 / CFBP 8728 / NCIMB 11950 / KT2440)).